Reading from the N-terminus, the 173-residue chain is Putative MgpC-like protein MPN_092 (173 aa).

It belongs to the MgpC family.

The protein is Putative MgpC-like protein MPN_092 of Mycoplasma pneumoniae (strain ATCC 29342 / M129 / Subtype 1) (Mycoplasmoides pneumoniae).